A 762-amino-acid chain; its full sequence is Phosphoribosylformylglycinamidine synthase subunit PurL (762 aa).

The active site involves His58. ATP is bound by residues Tyr61 and Arg105. A Mg(2+)-binding site is contributed by Glu107. Residues 108–111 (SHNH) and Arg130 contribute to the substrate site. His109 acts as the Proton acceptor in catalysis. Position 131 (Asp131) interacts with Mg(2+). A substrate-binding site is contributed by Gln255. Asp283 is a binding site for Mg(2+). Residue 327 to 329 (ESQ) participates in substrate binding. Residues Asn513 and Gly550 each coordinate ATP. Asn551 is a binding site for Mg(2+). Residue Ser553 participates in substrate binding.

This sequence belongs to the FGAMS family. As to quaternary structure, monomer. Part of the FGAM synthase complex composed of 1 PurL, 1 PurQ and 2 PurS subunits.

It is found in the cytoplasm. It carries out the reaction N(2)-formyl-N(1)-(5-phospho-beta-D-ribosyl)glycinamide + L-glutamine + ATP + H2O = 2-formamido-N(1)-(5-O-phospho-beta-D-ribosyl)acetamidine + L-glutamate + ADP + phosphate + H(+). It participates in purine metabolism; IMP biosynthesis via de novo pathway; 5-amino-1-(5-phospho-D-ribosyl)imidazole from N(2)-formyl-N(1)-(5-phospho-D-ribosyl)glycinamide: step 1/2. Its function is as follows. Part of the phosphoribosylformylglycinamidine synthase complex involved in the purines biosynthetic pathway. Catalyzes the ATP-dependent conversion of formylglycinamide ribonucleotide (FGAR) and glutamine to yield formylglycinamidine ribonucleotide (FGAM) and glutamate. The FGAM synthase complex is composed of three subunits. PurQ produces an ammonia molecule by converting glutamine to glutamate. PurL transfers the ammonia molecule to FGAR to form FGAM in an ATP-dependent manner. PurS interacts with PurQ and PurL and is thought to assist in the transfer of the ammonia molecule from PurQ to PurL. The sequence is that of Phosphoribosylformylglycinamidine synthase subunit PurL from Corynebacterium glutamicum (strain R).